We begin with the raw amino-acid sequence, 841 residues long: pre-rRNA 2'-O-ribose RNA methyltransferase FTSJ3 (841 aa).

S-adenosyl-L-methionine-binding residues include Gly56, Trp58, Asp76, Asp92, and Asp117. The Proton acceptor role is filled by Lys157. Residues 332–366 (ISLSSGEEDEGNEEDSTAGTTEQPSKEEEEEEQLN) form a disordered region. Ser333, Ser335, Ser336, Ser347, and Ser356 each carry phosphoserine. Residues 337–347 (GEEDEGNEEDS) show a composition bias toward acidic residues. The stretch at 356-404 (SKEEEEEEQLNQTLAEMKAQEVAELKRKKKKLLREQRKQRERVELKMDL) forms a coiled coil. Lys357 is covalently cross-linked (Glycyl lysine isopeptide (Lys-Gly) (interchain with G-Cter in SUMO2)). Arg389 bears the Citrulline mark. The interval 454 to 482 (VSDVEDDGDDTSLDSDLDPEELAGVRGHQ) is disordered. Acidic residues predominate over residues 456–474 (DVEDDGDDTSLDSDLDPEE). The residue at position 547 (Ser547) is a Phosphoserine. Thr567 carries the post-translational modification Phosphothreonine. Lys573 participates in a covalent cross-link: Glycyl lysine isopeptide (Lys-Gly) (interchain with G-Cter in SUMO2). Ser578 is subject to Phosphoserine. The interval 579–654 (PLYQDEAPKG…IVPIEDPAKH (76 aa)) is disordered. A Glycyl lysine isopeptide (Lys-Gly) (interchain with G-Cter in SUMO2) cross-link involves residue Lys637. Ser638 carries the phosphoserine modification. Lys653 participates in a covalent cross-link: Glycyl lysine isopeptide (Lys-Gly) (interchain with G-Cter in SUMO2). Ser670 is subject to Phosphoserine. Residue Lys672 forms a Glycyl lysine isopeptide (Lys-Gly) (interchain with G-Cter in SUMO2) linkage. Position 682 is a phosphoserine (Ser682). Residue Lys704 forms a Glycyl lysine isopeptide (Lys-Gly) (interchain with G-Cter in SUMO2) linkage. Residues 733 to 771 (IKKVAEAKARKKRRMLKRLEQTRKKAEAVVNTVDISERE) are a coiled coil. Citrulline is present on Arg777. Residues 805-815 (VRRPAGVRGHF) are compositionally biased toward basic residues. Residues 805-841 (VRRPAGVRGHFKVVDSRMKKDQRAQQRKEQKKKHKRK) form a disordered region. Basic and acidic residues predominate over residues 816–832 (KVVDSRMKKDQRAQQRK).

The protein belongs to the class I-like SAM-binding methyltransferase superfamily. RNA methyltransferase RlmE family. SPB1 subfamily. As to quaternary structure, interacts with NIP7. In terms of processing, citrullinated by PADI4.

It localises to the nucleus. The protein localises to the nucleolus. The enzyme catalyses a ribonucleotide in rRNA + S-adenosyl-L-methionine = a 2'-O-methylribonucleotide in rRNA + S-adenosyl-L-homocysteine + H(+). RNA 2'-O-methyltransferase involved in the processing of the 34S pre-rRNA to 18S rRNA and in 40S ribosomal subunit formation. The sequence is that of pre-rRNA 2'-O-ribose RNA methyltransferase FTSJ3 from Pongo abelii (Sumatran orangutan).